A 350-amino-acid chain; its full sequence is Small ribosomal subunit biogenesis GTPase RsgA (350 aa).

A disordered region spans residues 1-30; sequence MSKRKLTQNQQRRIQSNNAKTLHRHQHRHK. The segment covering 7–20 has biased composition (polar residues); that stretch reads TQNQQRRIQSNNAK. Positions 21 to 30 are enriched in basic residues; sequence TLHRHQHRHK. One can recognise a CP-type G domain in the interval 106 to 274; that stretch reads HNQIVRPDYY…LIDSPGIREF (169 aa). GTP is bound by residues 162 to 165 and 216 to 224; these read NKAD and GQSGVGKSS. Cysteine 298, cysteine 303, histidine 305, and cysteine 311 together coordinate Zn(2+).

This sequence belongs to the TRAFAC class YlqF/YawG GTPase family. RsgA subfamily. In terms of assembly, monomer. Associates with 30S ribosomal subunit, binds 16S rRNA. The cofactor is Zn(2+).

It is found in the cytoplasm. Functionally, one of several proteins that assist in the late maturation steps of the functional core of the 30S ribosomal subunit. Helps release RbfA from mature subunits. May play a role in the assembly of ribosomal proteins into the subunit. Circularly permuted GTPase that catalyzes slow GTP hydrolysis, GTPase activity is stimulated by the 30S ribosomal subunit. The chain is Small ribosomal subunit biogenesis GTPase RsgA from Histophilus somni (strain 2336) (Haemophilus somnus).